The primary structure comprises 92 residues: Putative septation protein SpoVG (92 aa).

The protein belongs to the SpoVG family.

Functionally, could be involved in septation. The sequence is that of Putative septation protein SpoVG from Clostridium botulinum (strain Eklund 17B / Type B).